The primary structure comprises 268 residues: Putative cysteine-rich repeat secretory protein 5 (268 aa).

An N-terminal signal peptide occupies residues 1-24; that stretch reads MTGINTHFAVALFCFFSFSLRAMS. Gnk2-homologous domains lie at 27–129 and 135–248; these read SQML…NVSF and DVPS…ISAL.

This sequence belongs to the cysteine-rich repeat secretory protein family.

It localises to the secreted. The protein is Putative cysteine-rich repeat secretory protein 5 (CRRSP5) of Arabidopsis thaliana (Mouse-ear cress).